Here is a 112-residue protein sequence, read N- to C-terminus: Putative pterin-4-alpha-carbinolamine dehydratase (112 aa).

This sequence belongs to the pterin-4-alpha-carbinolamine dehydratase family.

The catalysed reaction is (4aS,6R)-4a-hydroxy-L-erythro-5,6,7,8-tetrahydrobiopterin = (6R)-L-erythro-6,7-dihydrobiopterin + H2O. This is Putative pterin-4-alpha-carbinolamine dehydratase from Shewanella sp. (strain MR-7).